The sequence spans 374 residues: O-methyltransferase 16 (374 aa).

Positions 195, 219, 242, 262, and 276 each coordinate S-adenosyl-L-homocysteine. Asp-242 serves as a coordination point for S-adenosyl-L-methionine. His-280 functions as the Proton acceptor in the catalytic mechanism.

This sequence belongs to the class I-like SAM-binding methyltransferase superfamily. Cation-independent O-methyltransferase family. As to quaternary structure, homodimer. Expressed mainly in vasculature and cortex tissues at low levels.

The enzyme catalyses dopamine + S-adenosyl-L-methionine = 4-methoxytyramine + S-adenosyl-L-homocysteine + H(+). The protein operates within aromatic compound metabolism. Its pathway is alkaloid biosynthesis. In terms of biological role, O-methyltransferase participating in the biosynthesis of natural products derived from phenylethylamine, including mescaline, a natural hallucinogen potentially used in psychotherapeutic treatments. Catalyzes the O-methylation of dopamine to produce 4-methoxytyramine. This is O-methyltransferase 16 from Lophophora williamsii (Peyote).